The sequence spans 2326 residues: Chondroitin sulfate proteoglycan 4 (2326 aa).

The N-terminal stretch at 1-29 (MLLSPGHPLSAPALALILTLALLVRSTAP) is a signal peptide. Laminin G-like domains lie at 30 to 193 (ASFF…HEGC) and 203 to 381 (VGLG…AAGC). Residues 30-640 (ASFFGENHLE…HRGGPAQDLT (611 aa)) form a globular or compact configuration stabilized by disulfide bonds region. Positions 30 to 640 (ASFFGENHLE…HRGGPAQDLT (611 aa)) are neurite growth inhibition. At 30 to 2225 (ASFFGENHLE…SGFLGFLEAN (2196 aa)) the chain is on the extracellular side. A glycan (N-linked (GlcNAc...) asparagine) is linked at N130. The cysteines at positions 170 and 193 are disulfide-linked. N349 is a glycosylation site (N-linked (GlcNAc...) asparagine). C355 and C381 form a disulfide bridge. Residue N428 is glycosylated (N-linked (GlcNAc...) asparagine). CSPG repeat units lie at residues 429–524 (FTQL…LEVS), 554–646 (PRIV…VSDG), and 663–765 (AIQI…LEVQ). The interaction with COL6A2 stretch occupies residues 575–1044 (GPEIFQAYDP…RGGQRLLTTD (470 aa)). Residues 632 to 1450 (RGGPAQDLTF…SETQTDGFIL (819 aa)) are interaction with COL5A1. N-linked (GlcNAc...) asparagine glycosylation is found at N686 and N773. CSPG repeat units lie at residues 784–882 (TVWM…FRVT) and 902–993 (NAPV…FVAT). O-linked (Xyl...) (chondroitin sulfate) serine glycosylation occurs at S999. CSPG repeat units lie at residues 1022–1114 (APVQ…VSDG), 1130–1220 (YLHV…LSVA), 1242–1341 (PLQL…LDVA), 1360–1453 (TVIP…LLAN), 1477–1567 (PPVI…LSDG), 1585–1683 (LLSL…LLLS), 1708–1807 (PSRL…FRAH), 1836–1928 (PPQP…MSDG), and 1945–2033 (TIEV…VLAL). N1135 and N1206 each carry an N-linked (GlcNAc...) asparagine glycan. 2 N-linked (GlcNAc...) asparagine glycosylation sites follow: N1368 and N1453. Residues 1590 to 2225 (GSRKLTVCPE…SGFLGFLEAN (636 aa)) form a neurite growth inhibition region. The interval 1591–2225 (SRKLTVCPES…SGFLGFLEAN (635 aa)) is cysteine-containing. Residue N1649 is glycosylated (N-linked (GlcNAc...) asparagine). N1913, N2020, N2038, N2044, and N2079 each carry an N-linked (GlcNAc...) asparagine glycan. The CSPG 15 repeat unit spans residues 2042 to 2151 (TVNVTVQALL…TGDRLTLELQ (110 aa)). The interval 2187–2210 (RTETEKTGKSTPTGQPGQAASSPM) is disordered. A compositionally biased stretch (polar residues) spans 2195 to 2210 (KSTPTGQPGQAASSPM). Residues 2226-2250 (MFSVIIPVCLVLLLLALILPLLFYL) form a helical membrane-spanning segment. Residues 2251-2326 (RKRNKTGKHD…PALRNGQYWV (76 aa)) are Cytoplasmic-facing. T2256 carries the post-translational modification Phosphothreonine; by PKC/PRKCA. Positions 2324-2326 (YWV) match the PDZ-binding motif.

In terms of assembly, interacts with GRIP1, GRIP2 and GRIA2. Forms a ternary complex with GRIP1 and GRIA2. Interacts with ITGA4 through its chondroitin sulfate glycosaminoglycan. Interacts with BCAR1, CDC42 and ACK1. Interacts with MMP16. Interacts with the first PDZ domain of MPDZ. Interacts with PRKCA. Interacts with LGALS3 and the integrin composed of ITGB1 and ITGA3. Binds TNC, laminin-1, COL5A1 and COL6A2. Interacts with PLG and angiostatin. Binds FGF2 and PDGFA. In terms of processing, N-glycosylated. Post-translationally, O-glycosylated; contains glycosaminoglycan chondroitin sulfate which are required for proper localization and function in stress fiber formation. Involved in interaction with MMP16 and ITGA4. Phosphorylation by PRKCA regulates its subcellular location and function in cell motility. In terms of tissue distribution, neural cells and also extraneural tissues, especially in the developing mesenchyme.

The protein localises to the cell membrane. Its subcellular location is the apical cell membrane. It localises to the cell projection. It is found in the lamellipodium membrane. The protein resides in the cell surface. Functionally, proteoglycan playing a role in cell proliferation and migration which stimulates endothelial cells motility during microvascular morphogenesis. May also inhibit neurite outgrowth and growth cone collapse during axon regeneration. Cell surface receptor for collagen alpha 2(VI) which may confer cells ability to migrate on that substrate. Binds through its extracellular N-terminus growth factors, extracellular matrix proteases modulating their activity. May regulate MPP16-dependent degradation and invasion of type I collagen participating in melanoma cells invasion properties. May modulate the plasminogen system by enhancing plasminogen activation and inhibiting angiostatin. Also functions as a signal transducing protein by binding through its cytoplasmic C-terminus scaffolding and signaling proteins. May promote retraction fiber formation and cell polarization through Rho GTPase activation. May stimulate alpha-4, beta-1 integrin-mediated adhesion and spreading by recruiting and activating a signaling cascade through CDC42, ACK1 and BCAR1. May activate FAK and ERK1/ERK2 signaling cascades. This chain is Chondroitin sulfate proteoglycan 4 (Cspg4), found in Rattus norvegicus (Rat).